We begin with the raw amino-acid sequence, 285 residues long: 4-diphosphocytidyl-2-C-methyl-D-erythritol kinase (285 aa).

Lys-14 is a catalytic residue. 97–107 (PMGGGIGGGSS) contacts ATP. Asp-139 is a catalytic residue.

This sequence belongs to the GHMP kinase family. IspE subfamily.

The enzyme catalyses 4-CDP-2-C-methyl-D-erythritol + ATP = 4-CDP-2-C-methyl-D-erythritol 2-phosphate + ADP + H(+). It participates in isoprenoid biosynthesis; isopentenyl diphosphate biosynthesis via DXP pathway; isopentenyl diphosphate from 1-deoxy-D-xylulose 5-phosphate: step 3/6. Its function is as follows. Catalyzes the phosphorylation of the position 2 hydroxy group of 4-diphosphocytidyl-2C-methyl-D-erythritol. This Tolumonas auensis (strain DSM 9187 / NBRC 110442 / TA 4) protein is 4-diphosphocytidyl-2-C-methyl-D-erythritol kinase.